A 328-amino-acid polypeptide reads, in one-letter code: GTPase Obg (328 aa).

An Obg domain is found at 2–160; the sequence is YNFKDSVSIT…LNVRLELFLV (159 aa). The OBG-type G domain occupies 161–326; that stretch reads ADIGLVGLPN…LIKEFFVLAK (166 aa). GTP contacts are provided by residues 167–174, 192–196, 213–216, 280–283, and 307–309; these read GLPNAGKS, FTTKI, DIPG, NKLD, and SIY. Positions 174 and 194 each coordinate Mg(2+).

Belongs to the TRAFAC class OBG-HflX-like GTPase superfamily. OBG GTPase family. Monomer. Mg(2+) serves as cofactor.

The protein resides in the cytoplasm. Functionally, an essential GTPase which binds GTP, GDP and possibly (p)ppGpp with moderate affinity, with high nucleotide exchange rates and a fairly low GTP hydrolysis rate. Plays a role in control of the cell cycle, stress response, ribosome biogenesis and in those bacteria that undergo differentiation, in morphogenesis control. The protein is GTPase Obg of Borreliella afzelii (strain PKo) (Borrelia afzelii).